The chain runs to 219 residues: Elongation factor Ts (219 aa).

Residues 82–85 are involved in Mg(2+) ion dislocation from EF-Tu; sequence TDFV.

The protein belongs to the EF-Ts family.

The protein localises to the cytoplasm. Associates with the EF-Tu.GDP complex and induces the exchange of GDP to GTP. It remains bound to the aminoacyl-tRNA.EF-Tu.GTP complex up to the GTP hydrolysis stage on the ribosome. The protein is Elongation factor Ts of Synechococcus sp. (strain CC9902).